A 256-amino-acid chain; its full sequence is Pimeloyl-[acyl-carrier protein] methyl ester esterase (256 aa).

Residues 15–242 (HLVLLHGWGL…AAHAPFISHP (228 aa)) enclose the AB hydrolase-1 domain. Substrate is bound by residues Trp22, 82–83 (SL), and 143–147 (FLALQ). Ser82 (nucleophile) is an active-site residue. Residues Asp207 and His235 contribute to the active site. His235 lines the substrate pocket.

It belongs to the AB hydrolase superfamily. Carboxylesterase BioH family. Monomer.

The protein localises to the cytoplasm. The enzyme catalyses 6-carboxyhexanoyl-[ACP] methyl ester + H2O = 6-carboxyhexanoyl-[ACP] + methanol + H(+). It participates in cofactor biosynthesis; biotin biosynthesis. Its function is as follows. The physiological role of BioH is to remove the methyl group introduced by BioC when the pimeloyl moiety is complete. It allows to synthesize pimeloyl-ACP via the fatty acid synthetic pathway through the hydrolysis of the ester bonds of pimeloyl-ACP esters. In Salmonella newport (strain SL254), this protein is Pimeloyl-[acyl-carrier protein] methyl ester esterase.